A 393-amino-acid chain; its full sequence is Flap endonuclease 1 (393 aa).

Residues methionine 1–alanine 108 are N-domain. Position 34 (aspartate 34) interacts with Mg(2+). Residue arginine 74 coordinates DNA. Aspartate 90, glutamate 162, glutamate 164, aspartate 183, and aspartate 185 together coordinate Mg(2+). Positions leucine 126 to histidine 257 are I-domain. Glutamate 162 serves as a coordination point for DNA. The DNA site is built by glycine 235 and aspartate 237. Residue aspartate 237 participates in Mg(2+) binding. The segment at threonine 340–phenylalanine 348 is interaction with PCNA.

It belongs to the XPG/RAD2 endonuclease family. FEN1 subfamily. In terms of assembly, interacts with PCNA. Three molecules of FEN1 bind to one PCNA trimer with each molecule binding to one PCNA monomer. PCNA stimulates the nuclease activity without altering cleavage specificity. Requires Mg(2+) as cofactor. Post-translationally, phosphorylated. Phosphorylation upon DNA damage induces relocalization to the nuclear plasma.

It is found in the nucleus. It localises to the nucleolus. The protein resides in the nucleoplasm. The protein localises to the mitochondrion. Its function is as follows. Structure-specific nuclease with 5'-flap endonuclease and 5'-3' exonuclease activities involved in DNA replication and repair. During DNA replication, cleaves the 5'-overhanging flap structure that is generated by displacement synthesis when DNA polymerase encounters the 5'-end of a downstream Okazaki fragment. It enters the flap from the 5'-end and then tracks to cleave the flap base, leaving a nick for ligation. Also involved in the long patch base excision repair (LP-BER) pathway, by cleaving within the apurinic/apyrimidinic (AP) site-terminated flap. Acts as a genome stabilization factor that prevents flaps from equilibrating into structures that lead to duplications and deletions. Also possesses 5'-3' exonuclease activity on nicked or gapped double-stranded DNA, and exhibits RNase H activity. Also involved in replication and repair of rDNA and in repairing mitochondrial DNA. This Trypanosoma cruzi (strain CL Brener) protein is Flap endonuclease 1.